The primary structure comprises 255 residues: Transmembrane protein 81 (255 aa).

The N-terminal stretch at 1–30 (MKVLATSFVLGSLGLAFYLPLVVTTPKTLA) is a signal peptide. The Extracellular segment spans residues 31–226 (IPEKLQEAVG…HPKWKKKVAS (196 aa)). The N-linked (GlcNAc...) asparagine glycan is linked to asparagine 45. In terms of domain architecture, Ig-like spans 83–171 (TNWICGMLHF…VQLVKNLRLV (89 aa)). Cysteine 104 and cysteine 160 form a disulfide bridge. Residues 227–247 (ALGIGIAIGVVGGVLVRIVLC) form a helical membrane-spanning segment. Residues 248–255 (ALRGGLQQ) lie on the Cytoplasmic side of the membrane.

As to quaternary structure, forms a complex with IZUMO1 and SPACA6 on spermatocyte cell membrane required for fertilization. As to expression, highly expressed in sperm (at protein level).

The protein localises to the cell membrane. Essential fertilization factor required for male fertility. Part of a conserved trimeric sperm complex with the essential fertilization factors IZUMO1 and SPACA6 which bridges sperm and oocyte membranes during fertilization by binding to IZUMO1R/JUNO on the oocyte. This chain is Transmembrane protein 81, found in Homo sapiens (Human).